A 165-amino-acid polypeptide reads, in one-letter code: MLSLKYRIVLGLAAVVMLIDQGTKWLVEATIPFHGTVPVIHGVFDLVNIRNRGAAFGFLNRSDIEWQFWLFLVATVLAVWAILSLTRASKNEPVLYTAFGLIMGGALGNLVDRIRYRAVVDFLDFYWGEWHWPAFNVADIAICIGAFLAFVAMYRQPSPERGNKE.

The next 2 membrane-spanning stretches (helical) occupy residues 66 to 86 (WQFW…LSLT) and 91 to 111 (NEPV…GNLV). Active-site residues include Asp121 and Asp139. The chain crosses the membrane as a helical span at residues 132–152 (WPAFNVADIAICIGAFLAFVA).

It belongs to the peptidase A8 family.

It is found in the cell inner membrane. It catalyses the reaction Release of signal peptides from bacterial membrane prolipoproteins. Hydrolyzes -Xaa-Yaa-Zaa-|-(S,diacylglyceryl)Cys-, in which Xaa is hydrophobic (preferably Leu), and Yaa (Ala or Ser) and Zaa (Gly or Ala) have small, neutral side chains.. The protein operates within protein modification; lipoprotein biosynthesis (signal peptide cleavage). Its function is as follows. This protein specifically catalyzes the removal of signal peptides from prolipoproteins. The sequence is that of Lipoprotein signal peptidase from Nitratidesulfovibrio vulgaris (strain DP4) (Desulfovibrio vulgaris).